A 456-amino-acid polypeptide reads, in one-letter code: tRNA-2-methylthio-N(6)-dimethylallyladenosine synthase (456 aa).

The MTTase N-terminal domain maps to 6–125; sequence KRLFIKTYGC…LPELIAQAHR (120 aa). Positions 15, 51, 88, 163, 167, and 170 each coordinate [4Fe-4S] cluster. In terms of domain architecture, Radical SAM core spans 149-385; the sequence is QVEGYSAFVT…QELLSDQQAA (237 aa). Residues 388-450 enclose the TRAM domain; the sequence is ESMIGRTLPV…RNSLSGSLTG (63 aa).

The protein belongs to the methylthiotransferase family. MiaB subfamily. As to quaternary structure, monomer. The cofactor is [4Fe-4S] cluster.

The protein resides in the cytoplasm. The catalysed reaction is N(6)-dimethylallyladenosine(37) in tRNA + (sulfur carrier)-SH + AH2 + 2 S-adenosyl-L-methionine = 2-methylsulfanyl-N(6)-dimethylallyladenosine(37) in tRNA + (sulfur carrier)-H + 5'-deoxyadenosine + L-methionine + A + S-adenosyl-L-homocysteine + 2 H(+). In terms of biological role, catalyzes the methylthiolation of N6-(dimethylallyl)adenosine (i(6)A), leading to the formation of 2-methylthio-N6-(dimethylallyl)adenosine (ms(2)i(6)A) at position 37 in tRNAs that read codons beginning with uridine. This Maricaulis maris (strain MCS10) (Caulobacter maris) protein is tRNA-2-methylthio-N(6)-dimethylallyladenosine synthase.